The following is a 781-amino-acid chain: Mitochondrial inner membrane m-AAA protease component paraplegin (781 aa).

The N-terminal 43 residues, 1–43 (MAAALLLLRALRQSPEPGPWRLWAQLSGRSPGLFSGAGGRRPY), are a transit peptide targeting the mitochondrion. Positions 44–105 (VVRGTPIGLA…GSTLYFNTSG (62 aa)) are cleaved as a propeptide — removed in mature form. The disordered stretch occupies residues 105 to 134 (GLKQKNKDDDKPKGKAPEDDEEERRRKERE). Topologically, residues 106–144 (LKQKNKDDDKPKGKAPEDDEEERRRKEREDQMYRERLRT) are mitochondrial matrix. Over residues 109-134 (KNKDDDKPKGKAPEDDEEERRRKERE) the composition is skewed to basic and acidic residues. The chain crosses the membrane as a helical span at residues 145 to 165 (LFIIAIVMSLLNSLSTSGGSI). Topologically, residues 166–248 (SWADFVNEML…DRIPVSYKRT (83 aa)) are mitochondrial intermembrane. Residues 249–269 (GFFGNALYALGMTAVGLAILW) form a helical membrane-spanning segment. Topologically, residues 270-781 (YVFRLAGMTG…ASGEEEAPAP (512 aa)) are mitochondrial matrix. A312, G352, C353, G354, K355, T356, and L357 together coordinate ATP. Y505 is modified (3'-nitrotyrosine). Position 574 (H574) interacts with Zn(2+). E575 is an active-site residue. Residues H578 and D650 each contribute to the Zn(2+) site. The segment at 701–781 (HEARLLVARA…ASGEEEAPAP (81 aa)) is interaction with PPIF.

It in the N-terminal section; belongs to the AAA ATPase family. In the C-terminal section; belongs to the peptidase M41 family. Forms heterooligomers with AFG3L2; the m-AAA protease is composed of heterohexamers of AFG3L2 and SPG7. Component of the mitochondrial permeability transition pore complex (mPTPC), at least composed of SPG7, VDAC1 and PPIF. Interacts with MAIP1. It depends on Zn(2+) as a cofactor. Post-translationally, upon import into the mitochondrion, the N-terminal transit peptide is cleaved by the mitochondrial-processing peptidase (MPP) to generate an intermediate form which undergoes a second proteolytic cleavage mediated by proteases AFG3L2 removing an additional N-terminal fragment to generate the proteolytically active mature form.

It is found in the mitochondrion inner membrane. The catalysed reaction is ATP + H2O = ADP + phosphate + H(+). Catalytic component of the m-AAA protease, a protease that plays a key role in proteostasis of inner mitochondrial membrane proteins, and which is essential for axonal and neuron development. SPG7 possesses both ATPase and protease activities: the ATPase activity is required to unfold substrates, threading them into the internal proteolytic cavity for hydrolysis into small peptide fragments. The m-AAA protease exerts a dual role in the mitochondrial inner membrane: it mediates the processing of specific regulatory proteins and ensures protein quality control by degrading misfolded polypeptides. Mediates protein maturation of the mitochondrial ribosomal subunit MRPL32/bL32m by catalyzing the cleavage of the presequence of MRPL32/bL32m prior to assembly into the mitochondrial ribosome. Acts as a regulator of calcium in neurons by mediating degradation of SMDT1/EMRE before its assembly with the uniporter complex, limiting the availability of SMDT1/EMRE for MCU assembly and promoting efficient assembly of gatekeeper subunits with MCU. Also regulates mitochondrial calcium by catalyzing degradation of MCU. Plays a role in the formation and regulation of the mitochondrial permeability transition pore (mPTP) and its proteolytic activity is dispensable for this function. The sequence is that of Mitochondrial inner membrane m-AAA protease component paraplegin (Spg7) from Rattus norvegicus (Rat).